Reading from the N-terminus, the 139-residue chain is Ubiquitin-conjugating enzyme spm2 (139 aa).

Residues 5 to 139 (PRNFKLLEEL…PQPPEGSTFF (135 aa)) enclose the UBC core domain.

This sequence belongs to the ubiquitin-conjugating enzyme family. As to quaternary structure, heterodimer with ubc13.

Has a role in the DNA error-free postreplication repair (PRR) pathway. Lacks catalytic activity by itself. The ubc13/spm2 heterodimer catalyzes the synthesis of non-canonical poly-ubiquitin chains that are linked through 'Lys-63'. The polypeptide is Ubiquitin-conjugating enzyme spm2 (spm2) (Schizosaccharomyces pombe (strain 972 / ATCC 24843) (Fission yeast)).